The sequence spans 72 residues: Translation initiation factor IF-1 (72 aa).

In terms of domain architecture, S1-like spans 1-72 (MTKEDCIEMQ…SKGRIIFRSR (72 aa)).

This sequence belongs to the IF-1 family. Component of the 30S ribosomal translation pre-initiation complex which assembles on the 30S ribosome in the order IF-2 and IF-3, IF-1 and N-formylmethionyl-tRNA(fMet); mRNA recruitment can occur at any time during PIC assembly.

Its subcellular location is the cytoplasm. One of the essential components for the initiation of protein synthesis. Stabilizes the binding of IF-2 and IF-3 on the 30S subunit to which N-formylmethionyl-tRNA(fMet) subsequently binds. Helps modulate mRNA selection, yielding the 30S pre-initiation complex (PIC). Upon addition of the 50S ribosomal subunit IF-1, IF-2 and IF-3 are released leaving the mature 70S translation initiation complex. The sequence is that of Translation initiation factor IF-1 from Buchnera aphidicola subsp. Baizongia pistaciae (strain Bp).